The following is a 93-amino-acid chain: Small ribosomal subunit protein uS19 (93 aa).

This sequence belongs to the universal ribosomal protein uS19 family.

In terms of biological role, protein S19 forms a complex with S13 that binds strongly to the 16S ribosomal RNA. This is Small ribosomal subunit protein uS19 from Helicobacter acinonychis (strain Sheeba).